The sequence spans 142 residues: Arginine vasopressin-induced protein 1 (142 aa).

Disordered regions lie at residues 1–28 and 74–142; these read MGTP…KQAS and RLRR…QIRH. Residues 15 to 28 show a composition bias toward polar residues; the sequence is QVSTPQTRGRKQAS. Positions 74–88 are enriched in basic residues; sequence RLRRKRPPKQNHCSR. Residues 96-119 show a composition bias toward polar residues; it reads STASDPQASTTDTASSEQSGNSRR.

Its function is as follows. May be involved in MAP kinase activation, epithelial sodium channel (ENaC) down-regulation and cell cycling. The polypeptide is Arginine vasopressin-induced protein 1 (Avpi1) (Mus musculus (Mouse)).